The following is a 473-amino-acid chain: 3-isopropylmalate dehydratase large subunit (473 aa).

The interval 289–319 (TVTWGTTPGQTAGITEPIPDPDDLPEEDRDT) is disordered. A compositionally biased stretch (polar residues) spans 291-301 (TWGTTPGQTAG). A compositionally biased stretch (acidic residues) spans 307-317 (PDPDDLPEEDR). Residues Cys-348, Cys-408, and Cys-411 each coordinate [4Fe-4S] cluster.

The protein belongs to the aconitase/IPM isomerase family. LeuC type 1 subfamily. Heterodimer of LeuC and LeuD. [4Fe-4S] cluster serves as cofactor.

It carries out the reaction (2R,3S)-3-isopropylmalate = (2S)-2-isopropylmalate. It functions in the pathway amino-acid biosynthesis; L-leucine biosynthesis; L-leucine from 3-methyl-2-oxobutanoate: step 2/4. Catalyzes the isomerization between 2-isopropylmalate and 3-isopropylmalate, via the formation of 2-isopropylmaleate. The protein is 3-isopropylmalate dehydratase large subunit of Halorubrum lacusprofundi (strain ATCC 49239 / DSM 5036 / JCM 8891 / ACAM 34).